Here is a 157-residue protein sequence, read N- to C-terminus: MNILMLTFIICGLLTQVTKGSFEPQKCWKNNIGHCRRRCLDTERYILLCRNKLSCCISLIISQEYTRRPAFPVIHLEDITFDYSDVDSFTGSPVSMLNDLITFDTTKFGETMTPETNTPETTMPPPETTTPETTMPPSETATSETMPPPSQRALTHN.

The signal sequence occupies residues M1–G20. Intrachain disulfides connect C27–C55, C35–C49, and C39–C56. A disordered region spans residues G109–N157. Composition is skewed to low complexity over residues E110–T121 and T129–T145.

This sequence belongs to the beta-defensin family.

It localises to the secreted. Its function is as follows. Has antibacterial activity. In Pan troglodytes (Chimpanzee), this protein is Beta-defensin 125 (DEFB125).